The following is a 228-amino-acid chain: Large ribosomal subunit protein uL4 (228 aa).

Disordered regions lie at residues 45 to 102 (GRQG…SQRT) and 208 to 228 (PAKG…EANQ). Over residues 208–221 (PAKGKTAKAAATSG) the composition is skewed to low complexity.

Belongs to the universal ribosomal protein uL4 family. As to quaternary structure, part of the 50S ribosomal subunit.

In terms of biological role, one of the primary rRNA binding proteins, this protein initially binds near the 5'-end of the 23S rRNA. It is important during the early stages of 50S assembly. It makes multiple contacts with different domains of the 23S rRNA in the assembled 50S subunit and ribosome. Its function is as follows. Forms part of the polypeptide exit tunnel. The polypeptide is Large ribosomal subunit protein uL4 (Saccharopolyspora erythraea (strain ATCC 11635 / DSM 40517 / JCM 4748 / NBRC 13426 / NCIMB 8594 / NRRL 2338)).